The primary structure comprises 275 residues: Transmembrane protein 45A (275 aa).

The next 5 membrane-spanning stretches (helical) occupy residues 7-27 (HALP…KSIL), 51-71 (ILEG…EQFI), 100-120 (FFFG…SLPV), 150-170 (IFVH…AFLE), and 218-238 (ILFL…IVGM).

The protein belongs to the TMEM45 family.

The protein localises to the membrane. The chain is Transmembrane protein 45A (TMEM45A) from Homo sapiens (Human).